Here is a 168-residue protein sequence, read N- to C-terminus: Histone doublet miniH2B-H2A (168 aa).

It is found in the host nucleus. It localises to the host cytoplasm. The protein localises to the virion. Functionally, histone-like protein that is recruited to viral factories during viral replication and participates in viral DNA packaging and virion production probably by forming unstable nucleosome-like particles. May compact the viral DNA. The sequence is that of Histone doublet miniH2B-H2A from Melbournevirus (MelV).